Here is a 382-residue protein sequence, read N- to C-terminus: Enoyl-[acyl-carrier-protein] reductase, mitochondrial (382 aa).

Residues 1-17 (MSSFLSKRFLSFSQRAM) constitute a mitochondrion transit peptide. Residue Tyr-77 is the Proton donor of the active site. NADP(+)-binding positions include Asn-159, 187-190 (TSSV), 210-212 (RDR), 285-288 (YGGM), 310-312 (FWV), and Lys-375.

Belongs to the zinc-containing alcohol dehydrogenase family. Quinone oxidoreductase subfamily. Homodimer.

The protein localises to the mitochondrion matrix. It catalyses the reaction a 2,3-saturated acyl-[ACP] + NADP(+) = a (2E)-enoyl-[ACP] + NADPH + H(+). Its function is as follows. Catalyzes the NADPH-dependent reduction of trans-2-enoyl thioesters in mitochondrial fatty acid synthesis (fatty acid synthesis type II). Fatty acid chain elongation in mitochondria uses acyl carrier protein (ACP) as an acyl group carrier, but the enzyme accepts both ACP and CoA thioesters as substrates in vitro. Required for respiration and the maintenance of the mitochondrial compartment. The chain is Enoyl-[acyl-carrier-protein] reductase, mitochondrial (ETR1) from Kluyveromyces lactis (strain ATCC 8585 / CBS 2359 / DSM 70799 / NBRC 1267 / NRRL Y-1140 / WM37) (Yeast).